A 134-amino-acid polypeptide reads, in one-letter code: Arsenate reductase (134 aa).

Active-site nucleophile residues include Cys-11, Cys-83, and Cys-90. 2 disulfide bridges follow: Cys-11-Cys-83 and Cys-83-Cys-90.

Belongs to the low molecular weight phosphotyrosine protein phosphatase family. Thioredoxin-coupled ArsC subfamily.

Its subcellular location is the cytoplasm. The enzyme catalyses arsenate + [thioredoxin]-dithiol + H(+) = arsenite + [thioredoxin]-disulfide + H2O. Its function is as follows. Catalyzes the reduction of arsenate [As(V)] to arsenite [As(III)]. This Bacillus anthracis (strain A0248) protein is Arsenate reductase.